Here is a 181-residue protein sequence, read N- to C-terminus: Acireductone dioxygenase (181 aa).

4 residues coordinate Fe(2+): His97, His99, Glu103, and His141. The Ni(2+) site is built by His97, His99, Glu103, and His141.

This sequence belongs to the acireductone dioxygenase (ARD) family. In terms of assembly, monomer. It depends on Fe(2+) as a cofactor. Ni(2+) is required as a cofactor.

The catalysed reaction is 1,2-dihydroxy-5-(methylsulfanyl)pent-1-en-3-one + O2 = 3-(methylsulfanyl)propanoate + CO + formate + 2 H(+). It catalyses the reaction 1,2-dihydroxy-5-(methylsulfanyl)pent-1-en-3-one + O2 = 4-methylsulfanyl-2-oxobutanoate + formate + 2 H(+). Its pathway is amino-acid biosynthesis; L-methionine biosynthesis via salvage pathway; L-methionine from S-methyl-5-thio-alpha-D-ribose 1-phosphate: step 5/6. Catalyzes 2 different reactions between oxygen and the acireductone 1,2-dihydroxy-3-keto-5-methylthiopentene (DHK-MTPene) depending upon the metal bound in the active site. Fe-containing acireductone dioxygenase (Fe-ARD) produces formate and 2-keto-4-methylthiobutyrate (KMTB), the alpha-ketoacid precursor of methionine in the methionine recycle pathway. Ni-containing acireductone dioxygenase (Ni-ARD) produces methylthiopropionate, carbon monoxide and formate, and does not lie on the methionine recycle pathway. The polypeptide is Acireductone dioxygenase (Pseudomonas savastanoi pv. phaseolicola (strain 1448A / Race 6) (Pseudomonas syringae pv. phaseolicola (strain 1448A / Race 6))).